The chain runs to 490 residues: MSAIFEILDKDAGGRIGRLRTPHGTVETPTVMPVINPNIQLIPPKEMRNFGAEILITNSYIIYRKEELKSVALEKGLHGLLGFDGPIMTDSGSFQLSVYGSVEVTNEEILGFQQKIGSDIIVPLDIPTPPDVHYRRAEEELAITAERLEAARKFIQSEQLLAGPVQGSTYPELREKAASHLKDLNFEVYPLGAVVPLMEAYRYAELVDVIAASKKGLSPASPVHLFGAGHPMMFALAVAMGCDLFDSAAYALYAKDGRYITVNGTYHVEKLNYLPCSCPVCSKYTAEELKKADNREELLGKHNLYATFAEIRLIKQCIKDGKLLELVEQRCRAHPKLLDGLKKLYTHSSWLEQLDPATKGTFFYCGPESSSRPEILRFGKRLDRFSLQGSVIIRTGSVKGEKDYDQILTFKAPFGAFPVEMEEVYPFNAEVPKFPDYESLNTALSNTLKLIDLNPEAEFTFICEEEFKHPLIEEIRKRAKLVYRKDWKKE.

Aspartate 90 acts as the Nucleophile in catalysis. Aspartate 125 and alanine 193 together coordinate substrate. Positions 276, 278, and 281 each coordinate Zn(2+).

It belongs to the archaeosine tRNA-ribosyltransferase family. It depends on Zn(2+) as a cofactor.

The catalysed reaction is guanosine(15) in tRNA + 7-cyano-7-deazaguanine = 7-cyano-7-carbaguanosine(15) in tRNA + guanine. It participates in tRNA modification; archaeosine-tRNA biosynthesis. In terms of biological role, exchanges the guanine residue with 7-cyano-7-deazaguanine (preQ0) at position 15 in the dihydrouridine loop (D-loop) of archaeal tRNAs. The polypeptide is tRNA-guanine(15) transglycosylase (Methanosarcina barkeri (strain Fusaro / DSM 804)).